The sequence spans 134 residues: Large ribosomal subunit protein bL20 (134 aa).

This sequence belongs to the bacterial ribosomal protein bL20 family.

Its function is as follows. Binds directly to 23S ribosomal RNA and is necessary for the in vitro assembly process of the 50S ribosomal subunit. It is not involved in the protein synthesizing functions of that subunit. The sequence is that of Large ribosomal subunit protein bL20 from Brucella anthropi (strain ATCC 49188 / DSM 6882 / CCUG 24695 / JCM 21032 / LMG 3331 / NBRC 15819 / NCTC 12168 / Alc 37) (Ochrobactrum anthropi).